Here is a 262-residue protein sequence, read N- to C-terminus: tRNA pseudouridine synthase A (262 aa).

Asp-52 (nucleophile) is an active-site residue. Tyr-110 is a binding site for substrate.

This sequence belongs to the tRNA pseudouridine synthase TruA family. In terms of assembly, homodimer.

It catalyses the reaction uridine(38/39/40) in tRNA = pseudouridine(38/39/40) in tRNA. Formation of pseudouridine at positions 38, 39 and 40 in the anticodon stem and loop of transfer RNAs. The sequence is that of tRNA pseudouridine synthase A from Chromobacterium violaceum (strain ATCC 12472 / DSM 30191 / JCM 1249 / CCUG 213 / NBRC 12614 / NCIMB 9131 / NCTC 9757 / MK).